A 171-amino-acid polypeptide reads, in one-letter code: ATP synthase subunit b (171 aa).

Residues 19-39 form a helical membrane-spanning segment; the sequence is VGVGLILFIAIVIWAKAPAMI.

It belongs to the ATPase B chain family. In terms of assembly, F-type ATPases have 2 components, F(1) - the catalytic core - and F(0) - the membrane proton channel. F(1) has five subunits: alpha(3), beta(3), gamma(1), delta(1), epsilon(1). F(0) has three main subunits: a(1), b(2) and c(10-14). The alpha and beta chains form an alternating ring which encloses part of the gamma chain. F(1) is attached to F(0) by a central stalk formed by the gamma and epsilon chains, while a peripheral stalk is formed by the delta and b chains.

Its subcellular location is the cell inner membrane. Its function is as follows. F(1)F(0) ATP synthase produces ATP from ADP in the presence of a proton or sodium gradient. F-type ATPases consist of two structural domains, F(1) containing the extramembraneous catalytic core and F(0) containing the membrane proton channel, linked together by a central stalk and a peripheral stalk. During catalysis, ATP synthesis in the catalytic domain of F(1) is coupled via a rotary mechanism of the central stalk subunits to proton translocation. In terms of biological role, component of the F(0) channel, it forms part of the peripheral stalk, linking F(1) to F(0). The polypeptide is ATP synthase subunit b (Caulobacter sp. (strain K31)).